A 476-amino-acid polypeptide reads, in one-letter code: Bifunctional protein HldE (476 aa).

Positions 1–319 (MKVSLPAFEK…EALALHHGES (319 aa)) are ribokinase. Position 195 to 198 (195 to 198 (NMSE)) interacts with ATP. The active site involves D264. Residues 345–476 (MTNGCFDILH…AIIQNIMANQ (132 aa)) form a cytidylyltransferase region.

This sequence in the N-terminal section; belongs to the carbohydrate kinase PfkB family. In the C-terminal section; belongs to the cytidylyltransferase family. In terms of assembly, homodimer.

The enzyme catalyses D-glycero-beta-D-manno-heptose 7-phosphate + ATP = D-glycero-beta-D-manno-heptose 1,7-bisphosphate + ADP + H(+). It carries out the reaction D-glycero-beta-D-manno-heptose 1-phosphate + ATP + H(+) = ADP-D-glycero-beta-D-manno-heptose + diphosphate. Its pathway is nucleotide-sugar biosynthesis; ADP-L-glycero-beta-D-manno-heptose biosynthesis; ADP-L-glycero-beta-D-manno-heptose from D-glycero-beta-D-manno-heptose 7-phosphate: step 1/4. The protein operates within nucleotide-sugar biosynthesis; ADP-L-glycero-beta-D-manno-heptose biosynthesis; ADP-L-glycero-beta-D-manno-heptose from D-glycero-beta-D-manno-heptose 7-phosphate: step 3/4. In terms of biological role, catalyzes the phosphorylation of D-glycero-D-manno-heptose 7-phosphate at the C-1 position to selectively form D-glycero-beta-D-manno-heptose-1,7-bisphosphate. Its function is as follows. Catalyzes the ADP transfer from ATP to D-glycero-beta-D-manno-heptose 1-phosphate, yielding ADP-D-glycero-beta-D-manno-heptose. The protein is Bifunctional protein HldE of Shewanella baltica (strain OS155 / ATCC BAA-1091).